Here is a 2617-residue protein sequence, read N- to C-terminus: MVTTTRATNPTNTLLLFGPQALSFSTATFADIHARVVQTSENAWIKQTITSLPGLWDALVKEFPQYGALEGKQLLRDLDRWFETGTMEHAEPHLPNILLSPMVVITQLTEYVDYLKTMPHAADQQTETVGFCTGLLTALAASLASDIKGIRQYGAIAIKLAMIIGAVVDVQDITSPNGPSKSLAVAWDSAETQDRLNQIIDQSPEVYISVEYDYNRATITTAARSISSLQQRLRNAGLIASEIGLRGRFHCACYKNDIEALSKFCDSVPSLCLPDAAVLVLPTRSNDAGSFILSGKLHHCALRSILLDTSHWYQTLEVIRQSCLKSPSSMVVSFGPERCIPPSILKGLSSIVTTAAEYQPSYLHRDPELCNPNEIAVIGMSCKVAGADDVDEFWDLLCKAESQHQEVPKERFGFESAFREVDPTRKWYGNFINEHDCFDHKFFKKSAREIAATDPQQRQMLQVAYQAVEQSGYFTTPKSDKDRKIGCYIGVCAADYEYNVACHPPNAFMATGNLKSFVAGKISHWFGWTGPGLCIDTACSSSLVAVHQACQAILTGDCTAALAGGANIITHPLWYQNLAAASFLSPTGQCKPFDASADGYCRGEGFAAVFLKKMSAAIADGDMIIGSIKATAVNQNQNCTPVFVPNAPTLSDLFRDVLDRSQLTANQITVVEAHGTGTQVGDPAEYQSIRNVLGGPSRSTPLLFGSVKGLVGHTECTSGAVSLVKTLLMQQHEAIPPQPSFDRLNPEIPVSESDNMQIATRFSPWTAEYRAALINNYGACGSNASMVVAQAPRTEQRRSATRRTSVVLDYPFRLCGSDDRALRAYSERLLRFIASGIKDGISVADLAFNVCRQSNPTLDRSLAFACRTTQEVEEKLRAFVAGNQGLIATSRSKTPREVILCFGGQISNYVGLDREVYDNVALLRKHLAICDAACRDLGVDSIFPGIFQKSPISDPVKLQTILFSTQYSSAKAWMDSGVRPVAAVGHSFGELTALCATGILSLADAMKMIVGRATVIRDFWGEDKGSMIAVEADENRVQRLLAEAAKQCELIHARAPTIACVNGPTSYTLAGPVKSIDIVTEVISKLSDSGPSIRSKRLKVTNAFHSTLVEPLMEELEKVGQHLTFNTPTMQLERAIKHYSDATLTSDYVYDHMRNPVYFNQAVQRLAQQYPDSVWLEAGSNSTITSMASRALGSPRSLHFQAVNITSDDSWSMLITSTLSLWKQGISTNFWAYHAEQTYEYNPVLLPPYQFEPSRHWMELKVPSSMNNGKVQCGARDEEGPPKTLWSLIEASDKVARFQINTAAPKYVELVSGHVIANTAPICPATVEVDIVVEALRSLRPDFMDSNLQPQVLAVTNQSPICIDPNRSVWLECQAMDSNSVWEWRIVSDSLQEPGTSSSAHVLGKLAFLSGQDEVKQQESEFMRLERLIGHQRCVDLLNTTEADDIIQGRNIYTTFAGVVDYGEQYRGLKKIVGKGLESAGRVQKKPSEESWLDAHLGDCFSQVGGIWVNCMTDHNPDDMFIATGFEKWVRSPALRHGQPRSEIWDVLACHHRSSEQTYLTDIFIFDAEQGALTEVILGINYHKVAKASMSKILSRLSGTEAAPSSSTRAHPTSSSSPRLPGPSVPEDKSQNETQPAGTNAVAKKKSEKSAQQNVLEKTRALLAEISGLEPSEIEAETGLADIGIDSLMGMELARDLEALFKCPLLGDELANVTTFQGLVEYVQSAVGVPTNGDEPDNTNADEVSEEDNLAPSPSSSSSSTNLTEDSSLDQAETTTNISSYPGQTKTEKPAMPPASSKTLELSPSWVLEAFEESKRLTDHFIEQYRCANYVDTTLPKQTQLCVALTVEAFEQLGCPIRTAVAGQKLERIIHIPKHAQLAQYLYRLLSADARLIDLTEDGRITRTHMALPKPSDQILQDLLRLYPDHEWANRLAAFTGARLAEVLKGETDGLGLIFGTDEGRELVAGLYGDSLLNKLSYRQMEDIITRLASRIPRDSGPLKILEMGAGTGGTTKGMAPLLARLGIPVEYTFTDLSGSFVAAARKKYQKEYPFMKFQVHDIEKPPSDQLRHSQHIVIASNAIHATHSLTDSSRHVREFLKTDGFLMIVEMTQPVHWVDIIFGLFDGWWLFADGRDHAIASAGWWEKVFQSVGYGQVDWTDGHRPEVQIQRVIIAFASGPRYGRQPLPPAPPPNLVPGSHASRQAAVNEYLDKYTKGFTLPAQTSNPDISNSTSYWEKQCVLITGATGSLGVHLVAAVAALDDVQTVICLNRRSPMDPDLRQQQAFERRGILLEAASMSKIRVLQTDSSKPQLGLTDEVYSSLVTSTTHIIHNAWPMTGKRPLSGLEQQFQVMRNLLDLAAQCSSTRPANVPRIVFQFISSIATVGYYPLWSGQTLVPETCMGIESVLANGYGEAKYVCEQMLDRTLHQYPDRFRAMAVRLGQIAGSRTSGYWNPMEHLSFLFKSAQTLQVFPDFTGDLCWTPVNDVAATLSDLLLLSPHSSSMTDQPIYHIDNPVRQSWSEMVPVLIDALGIPAQNVFPFADWVCRVRAFPGQVEWDNPAALLIDFLDDHFLRMSCGGLLLDTKRACEHSPTLAAVGPVTAELARKYIQSWKEMGFLNP.

The interval 95-231 (PNILLSPMVV…AARSISSLQQ (137 aa)) is N-terminal acylcarrier protein transacylase domain (SAT). The active-site Nucleophile; for transacylase activity is the C132. The active-site Proton donor/acceptor; for transacylase activity is the H250. The region spanning 372 to 790 (PNEIAVIGMS…GSNASMVVAQ (419 aa)) is the Ketosynthase family 3 (KS3) domain. Catalysis depends on for beta-ketoacyl synthase activity residues C539, H674, and H713. Residues 902-1193 (FGGQISNYVG…ITSMASRALG (292 aa)) are malonyl-CoA:ACP transacylase (MAT) domain. The tract at residues 1282–1413 (PKTLWSLIEA…GKLAFLSGQD (132 aa)) is N-terminal hotdog fold. Positions 1282–1591 (PKTLWSLIEA…YHKVAKASMS (310 aa)) constitute a PKS/mFAS DH domain. A product template (PT) domain region spans residues 1310–1589 (LVSGHVIANT…INYHKVAKAS (280 aa)). H1314 serves as the catalytic Proton acceptor; for dehydratase activity. Residues 1443-1591 (ADDIIQGRNI…YHKVAKASMS (149 aa)) are C-terminal hotdog fold. D1499 functions as the Proton donor; for dehydratase activity in the catalytic mechanism. A disordered region spans residues 1600-1651 (TEAAPSSSTRAHPTSSSSPRLPGPSVPEDKSQNETQPAGTNAVAKKKSEKSA). A compositionally biased stretch (low complexity) spans 1602-1619 (AAPSSSTRAHPTSSSSPR). Positions 1653–1727 (QNVLEKTRAL…GLVEYVQSAV (75 aa)) constitute a Carrier domain. The residue at position 1687 (S1687) is an O-(pantetheine 4'-phosphoryl)serine. Positions 1728 to 1799 (GVPTNGDEPD…PAMPPASSKT (72 aa)) are disordered. Positions 1750 to 1766 (LAPSPSSSSSSTNLTED) are enriched in low complexity. The segment covering 1769–1785 (LDQAETTTNISSYPGQT) has biased composition (polar residues). The interval 1970–2158 (DSLLNKLSYR…VGYGQVDWTD (189 aa)) is methyltransferase domain. The tract at residues 2240 to 2485 (ITGATGSLGV…LCWTPVNDVA (246 aa)) is NADPH-binding (R) domain.

It depends on pantetheine 4'-phosphate as a cofactor.

The protein operates within secondary metabolite biosynthesis. Its function is as follows. Non-reducing polyketide synthase; part of the gene cluster that mediates the biosynthesis of nigerpyrone and its derivatives carbonarone A and pestalamide A. The biosynthesis pathway begins with the polyketide assembly by epaA to form phenylacetyl triketide precursor from successive condensation of two malonyl-CoA, presumably with one phenylacetyl-CoA starter unit produced by the phenylacetyl-CoA ligase epaB. For the nigerpyrone biosynthesis, the reactive polyketide chain is released as an aldehyde through the R-domain. A nonenzymatic cyclization and dehydration may create nigerpyrone. For the biosynthesis of carbonarone A and pestalamide A, an extra methyl group is added through the C-methyltransferase domain. Several further steps involving the dehydrogenase orf1, the cytochrome P450 monooxygenase orf2 and the FAD-dependent monooxygenase orf3 are required to form a carbonarone A precursor which is converted to carbonarone A via cyclization. The O-acetyltransferase epaC could catalyze the transfer of 2-methylsuccinyl-CoA, a common intermediate in the ethylmalonyl-CoA pathway, to generate the final product pestalamide A. The chain is Non-reducing polyketide synthase epaA from Aspergillus niger (strain ATCC MYA-4892 / CBS 513.88 / FGSC A1513).